The chain runs to 677 residues: Probable sulfate transporter 4.2 (677 aa).

Residues 1–83 (MSLAVKDLST…RTYRWHQYFK (83 aa)) are Cytoplasmic-facing. Residues 84-104 (LDLMAGITVGIMLVPQAMSYA) traverse the membrane as a helical segment. The Extracellular segment spans residues 105-108 (RLAG). Residues 109-129 (LQPIYGLYSSFVPVFVYAVFG) form a helical membrane-spanning segment. At 130 to 133 (SSRQ) the chain is on the cytoplasmic side. Residues 134–154 (LAVGPVALVSLLVSNALSGIV) traverse the membrane as a helical segment. Residues 155–161 (DPSEELY) are Extracellular-facing. Residues 162–182 (TELAILLALMVGIFESIMGFL) form a helical membrane-spanning segment. The Cytoplasmic segment spans residues 183 to 189 (RLGWLIR). Residues 190–210 (FISHSVISGFTTASAVVIGLS) form a helical membrane-spanning segment. The Extracellular portion of the chain corresponds to 211–241 (QLKYFLGYSVSRSSKIMPVIDSIIAGADQFK). The helical transmembrane segment at 242–262 (WPPFLLGCTILVILLVMKHVG) threads the bilayer. Residues 263–269 (KAKKELR) lie on the Cytoplasmic side of the membrane. Residues 270 to 290 (FIRAAGPLTGLALGTIIAKVF) form a helical membrane-spanning segment. Residues 291–318 (HPPSITLVGDIPQGLPKFSFPKSFDHAK) are Extracellular-facing. Residues 319–339 (LLLPTSALITGVAILESVGIA) form a helical membrane-spanning segment. Residues 340–355 (KALAAKNRYELDSNSE) are Cytoplasmic-facing. The helical transmembrane segment at 356–376 (LFGLGVANIFGSLFSAYPTTG) threads the bilayer. At 377 to 392 (SFSRSAVNSESEAKTG) the chain is on the extracellular side. The helical transmembrane segment at 393-413 (LSGLVTGIIIGCSLLFLTPMF) threads the bilayer. At 414-420 (KFIPQCA) the chain is on the cytoplasmic side. The helical transmembrane segment at 421–441 (LAAIVISAVSGLVDYEGAIFL) threads the bilayer. The Extracellular segment spans residues 442-459 (WRVDKRDFTLWTITSTTT). The chain crosses the membrane as a helical span at residues 460-480 (LFFGIEIGVLIGVGFSLAFVI). Residues 481–677 (HESANPHIAV…LEEPLLSREK (197 aa)) are Cytoplasmic-facing. An STAS domain is found at 505-629 (QYPEAYTYNG…VRVHDAVQVC (125 aa)).

This sequence belongs to the SLC26A/SulP transporter (TC 2.A.53) family.

The protein resides in the membrane. H(+)/sulfate cotransporter that may play a role in the regulation of sulfate assimilation. This chain is Probable sulfate transporter 4.2 (SULTR4;2), found in Arabidopsis thaliana (Mouse-ear cress).